A 371-amino-acid polypeptide reads, in one-letter code: Protein NDRG2 (371 aa).

Residues 1–21 (MAELQEVQITEEKPLLPGQTP) are disordered. Ala-2 bears the N-acetylalanine mark. Thr-20 is modified (phosphothreonine). Phosphoserine occurs at positions 326 and 328. At Thr-330 the chain carries Phosphothreonine. Ser-332 carries the post-translational modification Phosphoserine. At Thr-334 the chain carries Phosphothreonine. Residues 334 to 371 (TSAASVDGNRSRSRTLSQSSESGTLSSGPPGHTMEVSC) form a disordered region. A phosphoserine mark is found at Ser-335, Ser-338, and Ser-344. Residues 347-361 (RTLSQSSESGTLSSG) show a composition bias toward low complexity. Thr-348 is subject to Phosphothreonine. 4 positions are modified to phosphoserine: Ser-350, Ser-352, Ser-353, and Ser-355. Phosphothreonine is present on Thr-357. Position 370 is a phosphoserine (Ser-370).

The protein belongs to the NDRG family. As to quaternary structure, interacts with CTNNB1. As to expression, highly expressed in brain, heart, skeletal muscle and salivary gland, and moderately in kidney and liver. Expressed in dendritic cells, but not in other blood cells. Expression levels are low in pancreatic and liver cancer tissues; absent in meningioma. Expressed in low-grade gliomas but present at low levels in glioblastoma. Isoform 1 and isoform 2 are present in brain neurons and up-regulated in Alzheimer disease (at protein level).

Its subcellular location is the cytoplasm. The protein localises to the perinuclear region. The protein resides in the cell projection. It localises to the growth cone. In terms of biological role, contributes to the regulation of the Wnt signaling pathway. Down-regulates CTNNB1-mediated transcriptional activation of target genes, such as CCND1, and may thereby act as tumor suppressor. May be involved in dendritic cell and neuron differentiation. The protein is Protein NDRG2 (NDRG2) of Homo sapiens (Human).